We begin with the raw amino-acid sequence, 513 residues long: Cytochrome P450 86A1 (513 aa).

The chain crosses the membrane as a helical span at residues 7–27 (ILTGYAVAALSVYALWFYFLS). Cys456 lines the heme pocket.

It belongs to the cytochrome P450 family. Heme serves as cofactor. As to expression, expressed in roots.

It localises to the membrane. It catalyses the reaction an omega-methyl-long-chain fatty acid + reduced [NADPH--hemoprotein reductase] + O2 = an omega-hydroxy-long-chain fatty acid + oxidized [NADPH--hemoprotein reductase] + H2O + H(+). Its function is as follows. Catalyzes the omega-hydroxylation of various fatty acids (FA). Acts on saturated and unsaturated fatty acids with chain lengths from C12 to C18 but not on hexadecane. In Arabidopsis thaliana (Mouse-ear cress), this protein is Cytochrome P450 86A1 (CYP86A1).